The following is a 160-amino-acid chain: Glucan endo-1,3-beta-glucosidase, acidic isoform PR-O (160 aa).

Residue Glu81 is the Nucleophile of the active site.

It belongs to the glycosyl hydrolase 17 family. The N-terminus is blocked.

The protein localises to the secreted. It is found in the extracellular space. The catalysed reaction is Hydrolysis of (1-&gt;3)-beta-D-glucosidic linkages in (1-&gt;3)-beta-D-glucans.. Implicated in the defense of plants against pathogens. The chain is Glucan endo-1,3-beta-glucosidase, acidic isoform PR-O (PR0) from Nicotiana tabacum (Common tobacco).